A 97-amino-acid chain; its full sequence is Large ribosomal subunit protein uL23 (97 aa).

Belongs to the universal ribosomal protein uL23 family. Part of the 50S ribosomal subunit. Contacts protein L29, and trigger factor when it is bound to the ribosome.

Functionally, one of the early assembly proteins it binds 23S rRNA. One of the proteins that surrounds the polypeptide exit tunnel on the outside of the ribosome. Forms the main docking site for trigger factor binding to the ribosome. The polypeptide is Large ribosomal subunit protein uL23 (Chelativorans sp. (strain BNC1)).